Reading from the N-terminus, the 471-residue chain is ATP synthase subunit beta (471 aa).

Residue 156–163 (GGAGVGKT) participates in ATP binding.

The protein belongs to the ATPase alpha/beta chains family. In terms of assembly, F-type ATPases have 2 components, CF(1) - the catalytic core - and CF(0) - the membrane proton channel. CF(1) has five subunits: alpha(3), beta(3), gamma(1), delta(1), epsilon(1). CF(0) has three main subunits: a(1), b(2) and c(9-12). The alpha and beta chains form an alternating ring which encloses part of the gamma chain. CF(1) is attached to CF(0) by a central stalk formed by the gamma and epsilon chains, while a peripheral stalk is formed by the delta and b chains.

The protein localises to the cell membrane. The enzyme catalyses ATP + H2O + 4 H(+)(in) = ADP + phosphate + 5 H(+)(out). Functionally, produces ATP from ADP in the presence of a proton gradient across the membrane. The catalytic sites are hosted primarily by the beta subunits. This chain is ATP synthase subunit beta, found in Staphylococcus carnosus (strain TM300).